The primary structure comprises 1670 residues: DNA-directed RNA polymerase I subunit 1 (1670 aa).

Residues cysteine 79, cysteine 82, cysteine 89, histidine 92, cysteine 119, and cysteine 122 each coordinate Zn(2+). A disordered region spans residues 154 to 185 (ESNTPTKSKSSDESCESVVTTDSSEECEDSDV). A compositionally biased stretch (acidic residues) spans 176 to 185 (SSEECEDSDV). Cysteine 213 and cysteine 216 together coordinate Zn(2+). The interval 255 to 293 (TSSVENPDGFDDSGIDALSEVEDGDKETREKSTEVAAEF) is disordered. The segment covering 262–279 (DGFDDSGIDALSEVEDGD) has biased composition (acidic residues). Over residues 280-293 (KETREKSTEVAAEF) the composition is skewed to basic and acidic residues. The Mg(2+) site is built by aspartate 602, aspartate 604, and aspartate 606. The interval 1005–1017 (PQEYYFHCMAGRE) is bridging helix. Positions 1318-1437 (TGPIAGNETD…EQSKKKRRKF (120 aa)) are disordered. Acidic residues-rich tracts occupy residues 1339–1354 (DDGD…DDLG), 1366–1379 (DEMD…DETN), and 1388–1399 (EDPEMDSENEDT). Positions 1415-1429 (EPQKEVKGVKNVKEQ) are enriched in basic and acidic residues.

Belongs to the RNA polymerase beta' chain family. In terms of assembly, component of the RNA polymerase I (Pol I) complex consisting of at least 13 subunits.

The protein localises to the nucleus. It catalyses the reaction RNA(n) + a ribonucleoside 5'-triphosphate = RNA(n+1) + diphosphate. Functionally, DNA-dependent RNA polymerase catalyzes the transcription of DNA into RNA using the four ribonucleoside triphosphates as substrates. Largest and catalytic core component of RNA polymerase I which synthesizes ribosomal RNA precursors. Forms the polymerase active center together with the second largest subunit. A single stranded DNA template strand of the promoter is positioned within the central active site cleft of Pol I. A bridging helix emanates from NRPA1 and crosses the cleft near the catalytic site and is thought to promote translocation of Pol I by acting as a ratchet that moves the RNA-DNA hybrid through the active site by switching from straight to bent conformations at each step of nucleotide addition. In Arabidopsis thaliana (Mouse-ear cress), this protein is DNA-directed RNA polymerase I subunit 1.